We begin with the raw amino-acid sequence, 122 residues long: MSNIKKYIIDYDWKASIEIEIDHDVMTEEKLHQINNFWSDSEYRLNKHGSVLNAVLIMLAQHALLIAISSDLNAYGVVCEFDWNDGNGQEGWPPMDGSEGIRITDIDTSGIFDSDDMTIKAA.

In terms of biological role, the ea10 gene protein is believed to be involved in the production of the Tro phenotype. This phenotype is expressed when phages that possess a mutant cro gene and a thermolabile cI repressor gene are unable to propagate at restrictive temperatures. This inability is correlated with the shutoff of host macromolecular synthesis. This chain is Lambda prophage-derived protein ea10 (ea10), found in Escherichia coli O6:H1 (strain CFT073 / ATCC 700928 / UPEC).